The following is a 393-amino-acid chain: MAEERKDSEESPGTYSCSKTLRRRGEITPNGKVRYETTQNKAAGITKTNFFRRLVLSIVMISGFCWISVNDKIYSFGLIIFLTISIIREIIGITRKSDGRPFHLRTSIILGLAVPIYSYLVFPSIMMMYFSRVSKCFLRRLSFVCFYSYVAAFMCFVASLRKGRLKPQLGLFALIHLSTYTMAIAAKCAIFNLNKGRFWFVFPALLVISNDISAYVVGKSIGKRPLYRLSPKKTLEGFIGAFIFTTAVGFALGHLHVNSGFLRDADSEQFQKFMKFTVFGANVRVQSIYIHIIPFIFVASFVAPFSGFLASALKRAYKKKDFGEAISGHGGIADRMDCQVLIAIFASTYISSFIYTEERSVGSVFSLICRNFSHDEIMILIEMLNRRVESIRK.

The next 8 helical transmembrane spans lie at 49–69 (NFFR…WISV), 73–93 (IYSF…IIGI), 108–128 (IILG…IMMM), 141–161 (LSFV…ASLR), 171–191 (LFAL…CAIF), 198–218 (FWFV…YVVG), 237–257 (GFIG…HLHV), and 290–310 (IHII…GFLA).

Belongs to the CDS family.

It is found in the membrane. The enzyme catalyses a 1,2-diacyl-sn-glycero-3-phosphate + CTP + H(+) = a CDP-1,2-diacyl-sn-glycerol + diphosphate. Its pathway is phospholipid metabolism; CDP-diacylglycerol biosynthesis; CDP-diacylglycerol from sn-glycerol 3-phosphate: step 3/3. In Encephalitozoon cuniculi (strain GB-M1) (Microsporidian parasite), this protein is Phosphatidate cytidylyltransferase (CDS1).